The following is a 330-amino-acid chain: Probable ADP,ATP carrier protein At5g56450 (330 aa).

Acidic residues predominate over residues 1–10 (MCISKEDEED). Residues 1 to 22 (MCISKEDEEDPSRNRRNQSPLS) form a disordered region. A run of 6 helical transmembrane segments spans residues 27-61 (LKHFQKDLLAGAVMGGVVHTIVAPIERAKLLLQTQ), 103-127 (GSSVLRYYPSVALNFSLKDLYRSIL), 137-171 (IFSGALANFMAGSAAGCTALIVVYPLDIAHTRLAA), 203-230 (GLPASLHGVIIHRGLYFGGFDTVKEIFS), 236-270 (ELALWKRWGLAQAVTTSAGLASYPLDTVRRRIMMQ), and 300-325 (GALSNMFRSTGSAAILVFYDEVKRFL). Solcar repeat units follow at residues 28-126 (KHFQ…YRSI), 139-228 (SGAL…VKEI), and 241-324 (KRWG…VKRF). Residues Arg-108 and Lys-120 each coordinate ADP. Arg-264 contacts ADP. The short motif at 264 to 269 (RRRIMM) is the Substrate recognition element.

This sequence belongs to the mitochondrial carrier (TC 2.A.29) family. As to quaternary structure, monomer.

It is found in the membrane. The catalysed reaction is ADP(in) + ATP(out) = ADP(out) + ATP(in). Its function is as follows. ADP:ATP antiporter that catalyzes the exchange of ADP and ATP across the membrane. This Arabidopsis thaliana (Mouse-ear cress) protein is Probable ADP,ATP carrier protein At5g56450.